The sequence spans 209 residues: Large ribosomal subunit protein uL4 (209 aa).

The interval 50-89 is disordered; the sequence is MTKTKGLVSGGGKKPFKQKGTGGARQGSSRSILMPGGGTA.

Belongs to the universal ribosomal protein uL4 family. As to quaternary structure, part of the 50S ribosomal subunit.

One of the primary rRNA binding proteins, this protein initially binds near the 5'-end of the 23S rRNA. It is important during the early stages of 50S assembly. It makes multiple contacts with different domains of the 23S rRNA in the assembled 50S subunit and ribosome. In terms of biological role, forms part of the polypeptide exit tunnel. The chain is Large ribosomal subunit protein uL4 from Bdellovibrio bacteriovorus (strain ATCC 15356 / DSM 50701 / NCIMB 9529 / HD100).